Consider the following 234-residue polypeptide: Phosphoribosylformylglycinamidine synthase subunit PurQ (234 aa).

The Glutamine amidotransferase type-1 domain maps to 6–234; sequence VGVVVFPGSN…ESLFRSLTGV (229 aa). Cys-89 acts as the Nucleophile in catalysis. Catalysis depends on residues His-206 and Glu-208.

Part of the FGAM synthase complex composed of 1 PurL, 1 PurQ and 2 PurS subunits.

It localises to the cytoplasm. It catalyses the reaction N(2)-formyl-N(1)-(5-phospho-beta-D-ribosyl)glycinamide + L-glutamine + ATP + H2O = 2-formamido-N(1)-(5-O-phospho-beta-D-ribosyl)acetamidine + L-glutamate + ADP + phosphate + H(+). It carries out the reaction L-glutamine + H2O = L-glutamate + NH4(+). It participates in purine metabolism; IMP biosynthesis via de novo pathway; 5-amino-1-(5-phospho-D-ribosyl)imidazole from N(2)-formyl-N(1)-(5-phospho-D-ribosyl)glycinamide: step 1/2. Its function is as follows. Part of the phosphoribosylformylglycinamidine synthase complex involved in the purines biosynthetic pathway. Catalyzes the ATP-dependent conversion of formylglycinamide ribonucleotide (FGAR) and glutamine to yield formylglycinamidine ribonucleotide (FGAM) and glutamate. The FGAM synthase complex is composed of three subunits. PurQ produces an ammonia molecule by converting glutamine to glutamate. PurL transfers the ammonia molecule to FGAR to form FGAM in an ATP-dependent manner. PurS interacts with PurQ and PurL and is thought to assist in the transfer of the ammonia molecule from PurQ to PurL. The chain is Phosphoribosylformylglycinamidine synthase subunit PurQ from Chlorobium chlorochromatii (strain CaD3).